A 390-amino-acid polypeptide reads, in one-letter code: tRNA-specific 2-thiouridylase MnmA (390 aa).

ATP contacts are provided by residues 20-27 (AMSGGVDS) and Leu-46. The active-site Nucleophile is the Cys-114. Cys-114 and Cys-211 are joined by a disulfide. Gly-138 contacts ATP. An interaction with tRNA region spans residues 161–163 (RDQ). Cys-211 (cysteine persulfide intermediate) is an active-site residue.

This sequence belongs to the MnmA/TRMU family.

Its subcellular location is the cytoplasm. It carries out the reaction S-sulfanyl-L-cysteinyl-[protein] + uridine(34) in tRNA + AH2 + ATP = 2-thiouridine(34) in tRNA + L-cysteinyl-[protein] + A + AMP + diphosphate + H(+). Catalyzes the 2-thiolation of uridine at the wobble position (U34) of tRNA, leading to the formation of s(2)U34. The sequence is that of tRNA-specific 2-thiouridylase MnmA from Azorhizobium caulinodans (strain ATCC 43989 / DSM 5975 / JCM 20966 / LMG 6465 / NBRC 14845 / NCIMB 13405 / ORS 571).